The primary structure comprises 272 residues: Ribonuclease HII (272 aa).

The region spanning 87 to 272 is the RNase H type-2 domain; that stretch reads KYVAGVDEVG…HRMSFLKNIL (186 aa). Residues aspartate 93, glutamate 94, and aspartate 188 each contribute to the a divalent metal cation site.

This sequence belongs to the RNase HII family. Mn(2+) is required as a cofactor. It depends on Mg(2+) as a cofactor.

The protein resides in the cytoplasm. It catalyses the reaction Endonucleolytic cleavage to 5'-phosphomonoester.. Endonuclease that specifically degrades the RNA of RNA-DNA hybrids. The polypeptide is Ribonuclease HII (Clostridium perfringens (strain 13 / Type A)).